The primary structure comprises 449 residues: AP-4 complex subunit mu-1 (449 aa).

An MHD domain is found at 184–448 (KNEVFLDVVE…LSHSNAYVIR (265 aa)).

Belongs to the adaptor complexes medium subunit family. In terms of assembly, adaptor protein complex 4 (AP-4) is a heterotetramer composed of two large adaptins (epsilon-type subunit AP4E1 and beta-type subunit AP4B1), a medium adaptin (mu-type subunit AP4M1) and a small adaptin (sigma-type AP4S1). Interacts with tyrosine-based sorting signals on the cytoplasmic tail of cargo proteins such as APP, ATG9A, LAMP2 and NAGPA. Interacts with the C-terminal domain of GRID2. Interacts with GRIA1 and GRIA2; the interaction is indirect via CACNG3. Interacts with CACNG3; CACNG3 associates GRIA1 and GRIA2 with the adaptor protein complex 4 (AP-4) to target them to the somatodendritic compartment of neurons. Interacts with HOOK1 and HOOK2; the interactions are direct, mediate the interaction between FTS-Hook-FHIP (FHF) complex and AP-4 and the perinuclear distribution of AP-4.

It localises to the golgi apparatus. Its subcellular location is the trans-Golgi network membrane. It is found in the early endosome. Its function is as follows. Component of the adaptor protein complex 4 (AP-4). Adaptor protein complexes are vesicle coat components involved both in vesicle formation and cargo selection. They control the vesicular transport of proteins in different trafficking pathways. AP-4 forms a non clathrin-associated coat on vesicles departing the trans-Golgi network (TGN) and may be involved in the targeting of proteins from the trans-Golgi network (TGN) to the endosomal-lysosomal system. It is also involved in protein sorting to the basolateral membrane in epithelial cells and the proper asymmetric localization of somatodendritic proteins in neurons. Within AP-4, the mu-type subunit AP4M1 is directly involved in the recognition and binding of tyrosine-based sorting signals found in the cytoplasmic part of cargos. The adaptor protein complex 4 (AP-4) may also recognize other types of sorting signal. In Mus musculus (Mouse), this protein is AP-4 complex subunit mu-1.